Here is a 352-residue protein sequence, read N- to C-terminus: Palmitoyltransferase PFA5 (352 aa).

2 helical membrane-spanning segments follow: residues 12–32 (YWTI…GTWA) and 53–73 (IGLI…WVLI). The 51-residue stretch at 114–164 (VWCSNCQSLKVGRTKHSSHQGHCVPRFDHYCVWLGAVIGFKNYRLFVQFVF) folds into the DHHC domain. The S-palmitoyl cysteine intermediate role is filled by cysteine 144. Helical transmembrane passes span 159 to 179 (FVQF…TISV) and 195 to 215 (LIVL…LFVS).

It belongs to the DHHC palmitoyltransferase family. PFA5 subfamily.

It localises to the membrane. The catalysed reaction is L-cysteinyl-[protein] + hexadecanoyl-CoA = S-hexadecanoyl-L-cysteinyl-[protein] + CoA. This is Palmitoyltransferase PFA5 (PFA5) from Candida glabrata (strain ATCC 2001 / BCRC 20586 / JCM 3761 / NBRC 0622 / NRRL Y-65 / CBS 138) (Yeast).